The following is a 612-amino-acid chain: Cyclin-dependent kinase G1 (612 aa).

Residues 26–54 (SRDVYVRQSGRDDERRQIKRPSDHDLRRN) are compositionally biased toward basic and acidic residues. Disordered stretches follow at residues 26–60 (SRDV…RHRS) and 239–278 (CYSS…EDQD). In terms of domain architecture, Protein kinase spans 297-593 (FQKLNKINEG…VEDALNHGWF (297 aa)). ATP is bound by residues 303–311 (INEGTYGIV) and Lys-326. At Tyr-308 the chain carries Phosphotyrosine. The active-site Proton acceptor is the Asp-426. Position 453 is a phosphoserine (Ser-453). Position 459 is a phosphothreonine (Thr-459).

This sequence belongs to the protein kinase superfamily. Ser/Thr protein kinase family. Forms a complex with CYCL1-1. Associated with the spliceosome. Interacts with RS2Z33. As to expression, expressed in leaves and inflorescences. Lower levels of expression in roots and stems.

It localises to the nucleus speckle. It carries out the reaction L-seryl-[protein] + ATP = O-phospho-L-seryl-[protein] + ADP + H(+). It catalyses the reaction L-threonyl-[protein] + ATP = O-phospho-L-threonyl-[protein] + ADP + H(+). Cyclin-dependent kinase involved in pre-mRNA splicing. Required for the correct splicing of the sixth intron of CALS5 pre-mRNA. May stabilize the binding of U1 snRNP to this rare type of intron with a GC 5'SS. Involved in chromosome pairing and is required for the completion of synapsis in male meiocytes at high ambient temperatures. This is Cyclin-dependent kinase G1 (CDKG1) from Arabidopsis thaliana (Mouse-ear cress).